Reading from the N-terminus, the 312-residue chain is Metaxin-1 homolog (312 aa).

Residues 282–302 traverse the membrane as a helical segment; sequence ILFTIGALVLSVAFAIHTGLI.

The protein belongs to the metaxin family. As to quaternary structure, associates with the mitochondrial contact site and cristae organizing system (MICOS) complex (also known as MINOS or MitOS complex).

It is found in the mitochondrion outer membrane. Its function is as follows. Involved in transport of proteins into the mitochondrion. Essential for embryonic development. This Caenorhabditis briggsae protein is Metaxin-1 homolog.